Consider the following 268-residue polypeptide: Secreted RxLR effector protein 32 (268 aa).

A signal peptide spans 1-21; that stretch reads MRGAYYVAFALLVAASTRTAA. The short motif at 50-71 is the RxLR-dEER element; it reads RILRESPDPKDRLPVYASDEER. Residues 120 to 257 form a disordered region; the sequence is PKLEIKKSKR…PTPESLGIGG (138 aa). Positions 148 to 161 are enriched in low complexity; sequence SNSKKSLVSSASAK. Positions 212–224 are enriched in basic and acidic residues; it reads NLDKNKRPDEAKI.

Belongs to the RxLR effector family.

The protein localises to the secreted. It is found in the host cell. Secreted effector that completely suppresses the host cell death induced by cell death-inducing proteins. The polypeptide is Secreted RxLR effector protein 32 (Plasmopara viticola (Downy mildew of grapevine)).